A 1932-amino-acid polypeptide reads, in one-letter code: DOCK-like protein 1 (1932 aa).

A DOCKER domain is found at 1410-1824 (LLEANRPELF…EIERYSRTLS (415 aa)). Residues 1908–1921 (STFLAGSQPNTNTD) show a composition bias toward polar residues. The segment at 1908 to 1932 (STFLAGSQPNTNTDSQHKHDYSHSG) is disordered. Residues 1922 to 1932 (SQHKHDYSHSG) show a composition bias toward basic and acidic residues.

It belongs to the DOCK family. In terms of assembly, forms an active heterodimer with LMO1.

The protein localises to the cytoplasm. It is found in the mitochondrion. In terms of biological role, forms a transiant heterodimeric complex with LMO1, that acts as a guanine nucleotide exchange factor exchange factor (GEF) for the small GTPase RHO5. DCK1, LMO1 and RHO5 relocate to mitochondria upon oxidative stress and trigger cell death. The DCK1/LMO1/RHO5 signaling module mediates mitochondrial turnover under nitrogen starvation conditions via mitophagy. The DCK1/LMO1/RHO5 signaling module plays also a function in cell wall integrity signaling. In Saccharomyces cerevisiae (strain ATCC 204508 / S288c) (Baker's yeast), this protein is DOCK-like protein 1.